The primary structure comprises 261 residues: Glucosamine-6-phosphate deaminase (261 aa).

The active-site Proton acceptor; for enolization step is the Asp67. The active-site For ring-opening step is the Asp136. The Proton acceptor; for ring-opening step role is filled by His138. Catalysis depends on Glu143, which acts as the For ring-opening step.

The protein belongs to the glucosamine/galactosamine-6-phosphate isomerase family. NagB subfamily.

It carries out the reaction alpha-D-glucosamine 6-phosphate + H2O = beta-D-fructose 6-phosphate + NH4(+). It participates in amino-sugar metabolism; N-acetylneuraminate degradation; D-fructose 6-phosphate from N-acetylneuraminate: step 5/5. Catalyzes the reversible isomerization-deamination of glucosamine 6-phosphate (GlcN6P) to form fructose 6-phosphate (Fru6P) and ammonium ion. This Streptomyces coelicolor (strain ATCC BAA-471 / A3(2) / M145) protein is Glucosamine-6-phosphate deaminase.